A 234-amino-acid polypeptide reads, in one-letter code: Large ribosomal subunit protein uL1 (234 aa).

This sequence belongs to the universal ribosomal protein uL1 family. Part of the 50S ribosomal subunit.

Its function is as follows. Binds directly to 23S rRNA. The L1 stalk is quite mobile in the ribosome, and is involved in E site tRNA release. Functionally, protein L1 is also a translational repressor protein, it controls the translation of the L11 operon by binding to its mRNA. In Cronobacter sakazakii (strain ATCC BAA-894) (Enterobacter sakazakii), this protein is Large ribosomal subunit protein uL1.